We begin with the raw amino-acid sequence, 543 residues long: Alanine aminotransferase 1, mitochondrial (543 aa).

The N-terminal 55 residues, 1–55 (MRRFVIGQAKNLIDQSRRRQLHHHKNLSFVSLIPPFSAPSDSSSRHLSSSSSSDM), are a transit peptide targeting the mitochondrion. Residues 43 to 63 (SSRHLSSSSSSDMSASDSSSS) show a composition bias toward low complexity. The disordered stretch occupies residues 43 to 64 (SSRHLSSSSSSDMSASDSSSSL). Ser56 is modified (N-acetylserine). Pyridoxal 5'-phosphate-binding positions include Tyr173, 209 to 210 (AS), Tyr235, Asn291, Tyr322, and 354 to 356 (SFQ). At Lys360 the chain carries N6-(pyridoxal phosphate)lysine. Residues Arg369 and Asn397 each coordinate pyridoxal 5'-phosphate.

It belongs to the class-I pyridoxal-phosphate-dependent aminotransferase family. Alanine aminotransferase subfamily. As to quaternary structure, homodimer. The cofactor is pyridoxal 5'-phosphate. Post-translationally, the N-terminus is blocked. Mostly expressed in roots and shoots, mostly in vascular tissues, and, to a lower extent, in flowers and leaves.

It is found in the mitochondrion. The enzyme catalyses L-alanine + 2-oxoglutarate = pyruvate + L-glutamate. Its pathway is photosynthesis; C4 acid pathway. The protein operates within amino-acid degradation; L-alanine degradation via transaminase pathway; pyruvate from L-alanine: step 1/1. Is the major alanine aminotransferase in roots that catalyzes the conversion of alanine to pyruvate. Involved in the rapid conversion of alanine to pyruvate during recovery from low-oxygen stress. The protein is Alanine aminotransferase 1, mitochondrial of Arabidopsis thaliana (Mouse-ear cress).